Consider the following 376-residue polypeptide: Bifunctional enzyme IspD/IspF (376 aa).

Positions 1–220 (MRIAAILVAG…RSMSISMIPR (220 aa)) are 2-C-methyl-D-erythritol 4-phosphate cytidylyltransferase. The segment at 220 to 376 (RIGTGYDVHA…QAAVIIMIPA (157 aa)) is 2-C-methyl-D-erythritol 2,4-cyclodiphosphate synthase. Residues Asp226 and His228 each coordinate a divalent metal cation. 4-CDP-2-C-methyl-D-erythritol 2-phosphate is bound by residues 226–228 (DVH) and 252–253 (HS). His260 lines the a divalent metal cation pocket. Residues 274-276 (DIG), 350-353 (TTSE), Phe357, and Arg360 contribute to the 4-CDP-2-C-methyl-D-erythritol 2-phosphate site.

This sequence in the N-terminal section; belongs to the IspD/TarI cytidylyltransferase family. IspD subfamily. The protein in the C-terminal section; belongs to the IspF family. It depends on a divalent metal cation as a cofactor.

The enzyme catalyses 2-C-methyl-D-erythritol 4-phosphate + CTP + H(+) = 4-CDP-2-C-methyl-D-erythritol + diphosphate. The catalysed reaction is 4-CDP-2-C-methyl-D-erythritol 2-phosphate = 2-C-methyl-D-erythritol 2,4-cyclic diphosphate + CMP. It participates in isoprenoid biosynthesis; isopentenyl diphosphate biosynthesis via DXP pathway; isopentenyl diphosphate from 1-deoxy-D-xylulose 5-phosphate: step 2/6. Its pathway is isoprenoid biosynthesis; isopentenyl diphosphate biosynthesis via DXP pathway; isopentenyl diphosphate from 1-deoxy-D-xylulose 5-phosphate: step 4/6. In terms of biological role, bifunctional enzyme that catalyzes the formation of 4-diphosphocytidyl-2-C-methyl-D-erythritol from CTP and 2-C-methyl-D-erythritol 4-phosphate (MEP) (IspD), and catalyzes the conversion of 4-diphosphocytidyl-2-C-methyl-D-erythritol 2-phosphate (CDP-ME2P) to 2-C-methyl-D-erythritol 2,4-cyclodiphosphate (ME-CPP) with a corresponding release of cytidine 5-monophosphate (CMP) (IspF). The polypeptide is Bifunctional enzyme IspD/IspF (Granulibacter bethesdensis (strain ATCC BAA-1260 / CGDNIH1)).